Reading from the N-terminus, the 308-residue chain is Glutamyl-Q tRNA(Asp) synthetase (308 aa).

L-glutamate-binding positions include 19-23 and Glu55; that span reads RFAPS. Residues 22–32 carry the 'HIGH' region motif; the sequence is PSPSGELHFGS. 4 residues coordinate Zn(2+): Cys111, Cys113, Tyr125, and Cys129. L-glutamate contacts are provided by Tyr182 and Arg200. Positions 238–242 match the 'KMSKS' region motif; the sequence is KLSKQ. Lys241 is a binding site for ATP.

It belongs to the class-I aminoacyl-tRNA synthetase family. GluQ subfamily. Zn(2+) is required as a cofactor.

In terms of biological role, catalyzes the tRNA-independent activation of glutamate in presence of ATP and the subsequent transfer of glutamate onto a tRNA(Asp). Glutamate is transferred on the 2-amino-5-(4,5-dihydroxy-2-cyclopenten-1-yl) moiety of the queuosine in the wobble position of the QUC anticodon. This is Glutamyl-Q tRNA(Asp) synthetase from Escherichia coli O157:H7.